The chain runs to 317 residues: Melanocyte-stimulating hormone receptor (317 aa).

At 1-37 the chain is on the extracellular side; sequence MAVQGFQRRLLGSLNSTPTAIPQLGLAANQTGARCLE. Residue N29 is glycosylated (N-linked (GlcNAc...) asparagine). A helical transmembrane segment spans residues 38–63; sequence VSIPDGLFLSLGLVSLVENVLVVATI. The Cytoplasmic portion of the chain corresponds to 64 to 72; the sequence is AKNRNLHSP. A helical transmembrane segment spans residues 73-93; it reads TYCFICCLALSDLLVSGGNVL. Residues 94–118 lie on the Extracellular side of the membrane; sequence ETVVILLLEASALAARAAVVQPLDN. Residues 119 to 140 form a helical membrane-spanning segment; the sequence is VIDVITCSSMVSSLCFLGAIAV. The Cytoplasmic segment spans residues 141-163; sequence DRYVSIFYALRYHSIVTLPRARQ. Residues 164-183 form a helical membrane-spanning segment; that stretch reads AIAAIWVASVLFSTLFIAYY. The Extracellular segment spans residues 184-191; sequence DHAAVLLC. The chain crosses the membrane as a helical span at residues 192-211; that stretch reads LVVFFLAMLVXMAVLYVHML. At 212 to 240 the chain is on the cytoplasmic side; sequence ARACQHAQGIARLHKRQRPLHQGFGLKGA. The helical transmembrane segment at 241–266 threads the bilayer; sequence VTLTILLGIFFLCWGPFFLHLTLIVL. Topologically, residues 267-279 are extracellular; sequence CPQHPTCSCIFKN. A helical transmembrane segment spans residues 280–300; sequence FNLFLTLIICNAIIDPLIYAF. At 301 to 317 the chain is on the cytoplasmic side; sequence RRQELRRTLKEGLTCSW. C315 carries S-palmitoyl cysteine lipidation.

It belongs to the G-protein coupled receptor 1 family. In terms of assembly, interacts with MGRN1, but does not undergo MGRN1-mediated ubiquitination; this interaction competes with GNAS-binding and thus inhibits agonist-induced cAMP production. Interacts with OPN3; the interaction results in a decrease in MC1R-mediated cAMP signaling and ultimately a decrease in melanin production in melanocytes.

It is found in the cell membrane. Functionally, receptor for MSH (alpha, beta and gamma) and ACTH. The activity of this receptor is mediated by G proteins which activate adenylate cyclase. Mediates melanogenesis, the production of eumelanin (black/brown) and phaeomelanin (red/yellow), via regulation of cAMP signaling in melanocytes. The sequence is that of Melanocyte-stimulating hormone receptor (MC1R) from Hylobates muelleri (Mueller's Bornean gibbon).